The primary structure comprises 3305 residues: Microtubule-actin cross-linking factor 1, isoforms 6/7 (3305 aa).

Disordered stretches follow at residues 1–24 (MGKP…GEDE), 108–140 (VQKS…MPPN), 152–202 (LSEV…KSVD), 239–272 (AAAS…GFSE), 333–381 (EEWE…VAVS), 941–1007 (EPAI…PEWS), and 2865–2896 (SVEP…MPIL). Over residues 120–129 (PNAERKDNVN) the composition is skewed to basic and acidic residues. 2 consecutive EF-hand domains span residues 2958 to 2993 (HKKS…SKFP) and 2994 to 3029 (TTKL…NKDA). 10 residues coordinate Ca(2+): D2971, D2973, D2975, K2977, E2982, D3007, D3009, D3011, Y3013, and E3018. The GAR domain maps to 3034 to 3106 (TDADKIEDEV…EFLVKNDPCR (73 aa)). The segment at 3122 to 3305 (PEGASQGMTP…ASPRTPGPKR (184 aa)) is disordered. Residues 3142–3176 (SSRAASPTRSSSSASQSNHSCTSMPSSPATPASGT) show a composition bias toward low complexity. Residues 3193-3212 (FHSSRTSLAGDTSNSSSPAS) show a composition bias toward polar residues. Positions 3227-3241 (SRPGSRAGSRAGSRA) are enriched in low complexity. Polar residues predominate over residues 3256–3266 (ETQSACSDTSE). Positions 3267-3278 (SSAAGGQGSSRR) are enriched in low complexity.

It is found in the cytoplasm. The protein localises to the cytoskeleton. This is Microtubule-actin cross-linking factor 1, isoforms 6/7 from Mus musculus (Mouse).